Here is a 120-residue protein sequence, read N- to C-terminus: Large ribosomal subunit protein uL18 (120 aa).

It belongs to the universal ribosomal protein uL18 family. In terms of assembly, part of the 50S ribosomal subunit; part of the 5S rRNA/L5/L18/L25 subcomplex. Contacts the 5S and 23S rRNAs.

Its function is as follows. This is one of the proteins that bind and probably mediate the attachment of the 5S RNA into the large ribosomal subunit, where it forms part of the central protuberance. The chain is Large ribosomal subunit protein uL18 from Staphylococcus epidermidis (strain ATCC 35984 / DSM 28319 / BCRC 17069 / CCUG 31568 / BM 3577 / RP62A).